A 354-amino-acid chain; its full sequence is Uroporphyrinogen decarboxylase (354 aa).

Substrate-binding positions include 27-31 (RQAGR), Asp77, Tyr154, Thr209, and His327.

This sequence belongs to the uroporphyrinogen decarboxylase family. As to quaternary structure, homodimer.

It is found in the cytoplasm. It catalyses the reaction uroporphyrinogen III + 4 H(+) = coproporphyrinogen III + 4 CO2. It functions in the pathway porphyrin-containing compound metabolism; protoporphyrin-IX biosynthesis; coproporphyrinogen-III from 5-aminolevulinate: step 4/4. Catalyzes the decarboxylation of four acetate groups of uroporphyrinogen-III to yield coproporphyrinogen-III. The protein is Uroporphyrinogen decarboxylase of Escherichia coli (strain UTI89 / UPEC).